The sequence spans 121 residues: Large ribosomal subunit protein bL17 (121 aa).

Belongs to the bacterial ribosomal protein bL17 family. As to quaternary structure, part of the 50S ribosomal subunit. Contacts protein L32.

This Rubrobacter xylanophilus (strain DSM 9941 / JCM 11954 / NBRC 16129 / PRD-1) protein is Large ribosomal subunit protein bL17.